We begin with the raw amino-acid sequence, 407 residues long: Putative F-box protein At5g60560 (407 aa).

The region spanning Thr-2–Lys-49 is the F-box domain.

The sequence is that of Putative F-box protein At5g60560 from Arabidopsis thaliana (Mouse-ear cress).